The primary structure comprises 2495 residues: Non-reducing polyketide synthase adrD (2495 aa).

An N-terminal acylcarrier protein transacylase domain (SAT) region spans residues valine 14 to glutamine 252. Positions valine 386–glutamine 807 constitute a Ketosynthase family 3 (KS3) domain. Residues cysteine 551, histidine 686, and histidine 725 each act as for beta-ketoacyl synthase activity in the active site. The segment at leucine 913 to alanine 1222 is malonyl-CoA:ACP transacylase (MAT) domain. Residue serine 1000 is the For acyl/malonyl transferase activity of the active site. The N-terminal hotdog fold stretch occupies residues lysine 1294–glutamine 1422. Residues lysine 1294–serine 1601 enclose the PKS/mFAS DH domain. The tract at residues glutamate 1295 to leucine 1600 is product template (PT) domain. The Proton acceptor; for dehydratase activity role is filled by histidine 1325. Residues glutamate 1450–serine 1601 form a C-terminal hotdog fold region. Aspartate 1508 functions as the Proton donor; for dehydratase activity in the catalytic mechanism. The Carrier domain occupies serine 1651–alanine 1725. Residue serine 1685 is modified to O-(pantetheine 4'-phosphoryl)serine. The methyltransferase (CMeT) domain stretch occupies residues glutamine 1887 to asparagine 2120. Positions tyrosine 2150–tyrosine 2495 are thioesterase (TE) domain. Residues serine 2273 and aspartate 2432 each act as for thioesterase activity in the active site.

The catalysed reaction is 3 malonyl-CoA + acetyl-CoA + 2 S-adenosyl-L-methionine = 3,5-dimethylorsellinate + 2 S-adenosyl-L-homocysteine + 3 CO2 + 4 CoA. The protein operates within secondary metabolite biosynthesis; terpenoid biosynthesis. Functionally, non-reducing polyketide synthase; part of the gene cluster that mediates the biosynthesis of andrastins, meroterpenoid compounds that exhibit inhibitory activity against ras farnesyltransferase, suggesting that they could be promising leads for antitumor agents. The first step of the pathway is the synthesis of 3,5-dimethylorsellinic acid (DMOA) by the polyketide synthase adrD via condensation of one acetyl-CoA starter unit with 3 malonyl-CoA units and 2 methylations. DMAO is then converted to farnesyl-DMAO by the prenyltransferase adrG. The methyltransferase adrK catalyzes the methylation of the carboxyl group of farnesyl-DMAO to farnesyl-DMAO methyl ester which is further converted to epoxyfarnesyl-DMAO methyl ester by the FAD-dependent monooxygenase adrH. The terpene cyclase adrI then catalyzes the carbon skeletal rearrangement to generate the andrastin E, the first compound in the pathway having the andrastin scaffold, with the tetracyclic ring system. The post-cyclization tailoring enzymes adrF, adrE, adrJ, and adrA, are involved in the conversion of andrastin E into andrastin A. The short chain dehydrogenase adrF is responsible for the oxidation of the C-3 a hydroxyl group of andrastin E to yield the corresponding ketone, andrastin D. The ketoreductase adrE stereoselectively reduces the carbonyl moiety to reverse the stereochemistry of the C-3 position to yield andrastin F. The acetyltransferase adrJ is the acetyltransferase that attaches the acetyl group to the C-3 hydroxyl group of andrastin F to yield andrastin C. Finally, the cytochrome P450 monooxygenase adrA catalyzes two sequential oxidation reactions of the C-23 methyl group, to generate the corresponding alcohol andrastin B, and aldehyde andrastin A. The sequence is that of Non-reducing polyketide synthase adrD from Penicillium roqueforti.